A 255-amino-acid polypeptide reads, in one-letter code: Ribonuclease HII (255 aa).

Residues R58–Y247 form the RNase H type-2 domain. 3 residues coordinate a divalent metal cation: D64, E65, and D156.

Belongs to the RNase HII family. The cofactor is Mn(2+). Mg(2+) serves as cofactor.

Its subcellular location is the cytoplasm. The catalysed reaction is Endonucleolytic cleavage to 5'-phosphomonoester.. In terms of biological role, endonuclease that specifically degrades the RNA of RNA-DNA hybrids. In Syntrophomonas wolfei subsp. wolfei (strain DSM 2245B / Goettingen), this protein is Ribonuclease HII.